Consider the following 248-residue polypeptide: 1-(5-phosphoribosyl)-5-[(5-phosphoribosylamino)methylideneamino] imidazole-4-carboxamide isomerase (248 aa).

Catalysis depends on Asp8, which acts as the Proton acceptor. Asp129 serves as the catalytic Proton donor.

The protein belongs to the HisA/HisF family.

It localises to the cytoplasm. It carries out the reaction 1-(5-phospho-beta-D-ribosyl)-5-[(5-phospho-beta-D-ribosylamino)methylideneamino]imidazole-4-carboxamide = 5-[(5-phospho-1-deoxy-D-ribulos-1-ylimino)methylamino]-1-(5-phospho-beta-D-ribosyl)imidazole-4-carboxamide. It functions in the pathway amino-acid biosynthesis; L-histidine biosynthesis; L-histidine from 5-phospho-alpha-D-ribose 1-diphosphate: step 4/9. The chain is 1-(5-phosphoribosyl)-5-[(5-phosphoribosylamino)methylideneamino] imidazole-4-carboxamide isomerase from Desulfitobacterium hafniense (strain Y51).